Consider the following 406-residue polypeptide: Probable endo-xylogalacturonan hydrolase A (406 aa).

A signal peptide spans 1-18 (MTLYRNLLLLASLGLSYA). An N-linked (GlcNAc...) asparagine glycan is attached at N84. 2 PbH1 repeats span residues 183–213 (ATNVVFSNLKMDANSKSDNPPKNTDGFDIGE) and 214–235 (STYVTITEVTVVNDDDCVALKP). The active-site Proton donor is the D228. H251 is an active-site residue. PbH1 repeat units lie at residues 266–289 (VKNIYVTGATMINSTKAAGIKTYP), 299–320 (VSNVTFTDFTVDNSDYAFQIQS), and 333–375 (PGNA…SISG). Residues N278 and N301 are each glycosylated (N-linked (GlcNAc...) asparagine).

This sequence belongs to the glycosyl hydrolase 28 family.

The protein resides in the secreted. Its function is as follows. Pectinolytic enzyme involved in the degradation of xylogalacturonan (xga), a galacturonan backbone heavily substituted with xylose, and which is one important component of the hairy regions of pectin. Activity requires a galacturonic acid backbone substituted with xylose. The protein is Probable endo-xylogalacturonan hydrolase A (xghA) of Aspergillus niger (strain ATCC MYA-4892 / CBS 513.88 / FGSC A1513).